Here is a 219-residue protein sequence, read N- to C-terminus: Probable glucosamine 6-phosphate N-acetyltransferase (219 aa).

The N-acetyltransferase domain occupies 42–198; that stretch reads MKVRPLKDTD…EGPTLKRNAT (157 aa). Residues Thr64, 111–114, and 123–125 each bind substrate; these read KFIH and EDV. Residue 133–138 participates in acetyl-CoA binding; that stretch reads GKQLGK. Residues 154 to 155 and Arg186 each bind substrate; that span reads YK.

The protein belongs to the acetyltransferase family. GNA1 subfamily.

It carries out the reaction D-glucosamine 6-phosphate + acetyl-CoA = N-acetyl-D-glucosamine 6-phosphate + CoA + H(+). The protein operates within nucleotide-sugar biosynthesis; UDP-N-acetyl-alpha-D-glucosamine biosynthesis; N-acetyl-alpha-D-glucosamine 1-phosphate from alpha-D-glucosamine 6-phosphate (route I): step 1/2. This Drosophila melanogaster (Fruit fly) protein is Probable glucosamine 6-phosphate N-acetyltransferase.